The primary structure comprises 103 residues: Large ribosomal subunit protein bL21 (103 aa).

The protein belongs to the bacterial ribosomal protein bL21 family. As to quaternary structure, part of the 50S ribosomal subunit. Contacts protein L20.

In terms of biological role, this protein binds to 23S rRNA in the presence of protein L20. The polypeptide is Large ribosomal subunit protein bL21 (Shewanella frigidimarina (strain NCIMB 400)).